The chain runs to 387 residues: MVNSKTVVSALALSALAAAAPAPSSTTSFSINQVAVKKPAIHPAVKYAKALAKYHAEIPSNVASAAASAQSGSATNKPTADDEEYVTPITAGSSTLHLDFDTGSADLWTYSASTRGVGSHSTYDTSTGKKVSGASWQISYGDGSSASGVVYKDKVVVGGVTASSQAVEVATQVSSEFSQDTSNDGLLGLAFSSINTVSPTPQKTFYDNVKSSLAKPVFAVTLKHQAPGTYDFGFIDKSKYKGSLAYTNVDNSQGFWQFTADGYSIGGSGGGSSFSAIADTGTTLVLLDDSIVDEYYSQVQGAQNDSSQGGYVFDCSADLPDFGVQIGDYTAVIPGKYINYASTGSTCFGGIQSNSGIGFSILGDVFLKSQYVVFDGDNLQLGFAAQA.

The N-terminal stretch at 1 to 19 (MVNSKTVVSALALSALAAA) is a signal peptide. Positions 20 to 66 (APAPSSTTSFSINQVAVKKPAIHPAVKYAKALAKYHAEIPSNVASAA) are cleaved as a propeptide — activation peptide. Residues 85-384 (YVTPITAGSS…DGDNLQLGFA (300 aa)) form the Peptidase A1 domain. Active-site residues include Asp-101 and Asp-279. An N-linked (GlcNAc...) asparagine glycan is attached at Asn-304. Cys-315 and Cys-347 are disulfide-bonded.

This sequence belongs to the peptidase A1 family. As to quaternary structure, monomer.

Its subcellular location is the secreted. The catalysed reaction is Hydrolysis of proteins with broad specificity similar to that of pepsin A, preferring hydrophobic residues at P1 and P1', but also cleaving 20-Gly-|-Glu-21 in the B chain of insulin. Clots milk, and activates trypsinogen.. Functionally, secreted aspartic endopeptidase that allows assimilation of proteinaceous substrates. The scissile peptide bond is attacked by a nucleophilic water molecule activated by two aspartic residues in the active site. Shows a broad primary substrate specificity. Favors hydrophobic residues at the P1 and P1' positions, but can also activate trypsinogen and hydrolyze the B chain of insulin between positions 'Gly-20' and 'Glu-21'. This chain is Penicillopepsin-1 (pepA), found in Talaromyces stipitatus (strain ATCC 10500 / CBS 375.48 / QM 6759 / NRRL 1006) (Penicillium stipitatum).